The following is a 355-amino-acid chain: RNA 3'-terminal phosphate cyclase (355 aa).

Residues Gln-109 and 291–295 each bind ATP; that span reads HLADQ. The active-site Tele-AMP-histidine intermediate is His-316.

Belongs to the RNA 3'-terminal cyclase family. Type 1 subfamily.

It localises to the cytoplasm. It catalyses the reaction a 3'-end 3'-phospho-ribonucleotide-RNA + ATP = a 3'-end 2',3'-cyclophospho-ribonucleotide-RNA + AMP + diphosphate. Its function is as follows. Catalyzes the conversion of 3'-phosphate to a 2',3'-cyclic phosphodiester at the end of RNA. The mechanism of action of the enzyme occurs in 3 steps: (A) adenylation of the enzyme by ATP; (B) transfer of adenylate to an RNA-N3'P to produce RNA-N3'PP5'A; (C) and attack of the adjacent 2'-hydroxyl on the 3'-phosphorus in the diester linkage to produce the cyclic end product. The biological role of this enzyme is unknown but it is likely to function in some aspects of cellular RNA processing. This Koribacter versatilis (strain Ellin345) protein is RNA 3'-terminal phosphate cyclase.